The sequence spans 544 residues: MATAPGPAGIAMGSVGSLLERQDFSPEELRAALAGSRGSRQPDGLLRKGLGQREFLSYLHLPKKDSKSTKNTKRAPRNEPADYATLYYREHSRAGDFSKTSLPERGRFDKCRIRPSVFKPTAGNGKGFLSMQSLASHKGQKLWRSNGSLHTLACHPPLSPGPRASQARAQLLHALSLDEGGPEPEPSLSDSSSGGSFGRSPGTGPSPFSSSLGHLNHLGGSLDRASQGPKEAGPPAVLSCLPEPPPPYEFSCSSAEEMGAVLPETCEELKRGLGDEDGSNPFTQVLEERQRLWLAELKRLYVERLHEVTQKAERSERNLQLQLFMAQQEQRRLRKELRAQQGLAPEPRAPGTLPEADPSARPEEEARWEVCQKTAEISLLKQQLREAQAELAQKLAEIFSLKTQLRGSRAQAQAQDAELVRLREAVRSLQEQAPREEAPGSCETDDCKSRGLLGEAGGSEARDSAEQLRAELLQERLRGQEQALRFEQERRTWQEEKERVLRYQREIQGGYMDMYRRNQALEQELRALREPPTPWSPRLESSKI.

Disordered stretches follow at residues 61–84 (LPKK…ADYA), 116–252 (SVFK…EFSC), 335–365 (KELR…PEEE), and 430–465 (QEQA…RDSA). Position 176 is a phosphoserine (Ser176). Positions 186–222 (PSLSDSSSGGSFGRSPGTGPSPFSSSLGHLNHLGGSL) are enriched in low complexity. The stretch at 294–530 (LAELKRLYVE…LEQELRALRE (237 aa)) forms a coiled coil.

This sequence belongs to the N4BP3 family. In terms of assembly, binds NEDD4. Interacts with 14-3-3 proteins. Interacts with MAVS.

It is found in the cytoplasmic vesicle. It localises to the cell projection. The protein localises to the axon. Its subcellular location is the dendrite. Functionally, plays a positive role in the antiviral innate immune signaling pathway. Mechanistically, interacts with MAVS and functions as a positive regulator to promote 'Lys-63'-linked polyubiquitination of MAVS and thus strengthens the interaction between MAVS and TRAF2. Also plays a role in axon and dendrite arborization during cranial nerve development. May also be important for neural crest migration and early development of other anterior structures including eye, brain and cranial cartilage. The polypeptide is NEDD4-binding protein 3 (N4BP3) (Homo sapiens (Human)).